We begin with the raw amino-acid sequence, 498 residues long: Myocyte-specific enhancer factor 2A (498 aa).

Positions 3-57 constitute an MADS-box domain; sequence RKKIQITRIMDERNRQVTFTKRKFGLMKKAYELSVLCDCEIALIIFNSSNKLFQY. Positions 58–86 form a DNA-binding region, mef2-type; that stretch reads ASTDMDKVLLKYTEYNEPHESRTNSDIVE. S59 bears the Phosphoserine; by CK2 mark. 2 positions are modified to phosphoserine: S98 and S108. S108 is subject to Phosphothreonine. The interval 172–220 is disordered; it reads LADSSMLSPPPATLHRNVSPGAPQRPPSTGSASGMLSTTDLTVPNGAGN. The segment covering 198–220 has biased composition (polar residues); that stretch reads PSTGSASGMLSTTDLTVPNGAGN. Position 233 is a phosphoserine (S233). Residues 240 to 268 form a disordered region; sequence TGANSLGKVMPTKSPPPPGGGSLGMNSRK. The residue at position 247 (K247) is an N6-acetyllysine. S253 bears the Phosphoserine mark. Residues 264 to 281 are required for interaction with MAPKs; the sequence is MNSRKPDLRVVIPPSSKG. Residues 287–294 form a beta domain region; the sequence is SEEEELEL. T310 and T317 each carry phosphothreonine; by MAPK7. Phosphothreonine; by NLK is present on T310. S353 carries the phosphoserine; by MAPK7 modification. The span at 388–400 shows a compositional bias: polar residues; the sequence is SNLSINTNQNINI. Positions 388–498 are disordered; it reads SNLSINTNQN…KRMRMDTWVT (111 aa). N6-acetyllysine; alternate is present on K401. K401 is covalently cross-linked (Glycyl lysine isopeptide (Lys-Gly) (interchain with G-Cter in SUMO); alternate). Position 406 is a phosphoserine (S406). Residue T413 is modified to Phosphothreonine. A compositionally biased stretch (pro residues) spans 426 to 436; that stretch reads QQPPPQPPQPQ. S444 carries the phosphoserine modification. A compositionally biased stretch (low complexity) spans 444-457; that stretch reads SPVDSLSSSSSSYD. Basic and acidic residues-rich tracts occupy residues 458-468 and 479-498; these read GSDREDPRGDF and NTED…TWVT.

Belongs to the MEF2 family. As to quaternary structure, binds DNA as a homo- or heterodimer. Dimerizes with MEF2D. Interacts with HDAC7. Interacts with PIAS1; the interaction enhances sumoylation. Interacts with HDAC4, HDAC9 and SLC2A4RG. Interacts (via the N-terminal) with MAPK7; the interaction results in the phosphorylation and transcriptional activity of MEF2A. In terms of processing, constitutive phosphorylation on Ser-406 promotes Lys-401 sumoylation thus preventing acetylation at this site. Dephosphorylation on Ser-406 by PPP3CA upon neuron depolarization promotes a switch from sumoylation to acetylation on residue Lys-403 leading to inhibition of dendrite claw differentiation. Phosphorylation on Thr-312 and Thr-319 are the main sites involved in p38 MAPK signaling and activate transcription. Phosphorylated on these sites by MAPK14/p38alpha and MAPK11/p38beta, but not by MAPK13/p38delta nor by MAPK12/p38gamma. Phosphorylation on Ser-408 by CDK5 induced by neurotoxicity inhibits MEF2A transcriptional activation leading to apoptosis of cortical neurons. Phosphorylation on Thr-312, Thr-319 and Ser-355 can be induced by EGF. Isoform 3 is phosphorylated on Ser-98 and Thr-108. Sumoylation on Lys-401 is enhanced by PIAS1 and represses transcriptional activity. Phosphorylation on Ser-406 is required for sumoylation. Has no effect on nuclear location nor on DNA binding. Sumoylated with SUMO1 and, to a lesser extent with SUMO2 and SUMO3. PIASx facilitates sumoylation in postsynaptic dendrites in the cerebellar cortex and promotes their morphogenesis. Post-translationally, acetylation on Lys-401 activates transcriptional activity. Acetylated by p300 on several sites in diffentiating myocytes. Acetylation on Lys-4 increases DNA binding and transactivation. Hyperacetylation by p300 leads to enhanced cardiac myocyte growth and heart failure. In terms of processing, proteolytically cleaved in cerebellar granule neurons on several sites by caspase 3 and caspase 7 following neurotoxicity. Preferentially cleaves the CDK5-mediated hyperphosphorylated form which leads to neuron apoptosis and transcriptional inactivation. As to expression, widely expressed though mainly restricted to skeletal and cardiac muscle, brain, neurons and lymphocytes. Differentially expressed depending on if isoforms contain the beta domain or not, with the total expression of the beta domain-lacking isoforms vastly exceeding that of the beta domain-containing isoforms. Isoforms containing the beta domain are expressed primarily in skeletal and cardiac muscle and in brain. Also present in lung and testis. Splicing to include the beta domain is induced in differentiating myocytes. Isoforms lacking the beta domain are expressed less abundantly in skeletal muscle, brain and lymphocytes, and are uniquely found in ovary, liver, spleen and kidney. In embryos, the beta domain-containing and beta domain-lacking isoforms are equally expressed. Also expressed cerebellar granule neurons and other regions of the CNS. Highest levels in the olfactory bulb, cortex, hippocampus, thalamus and cerebellum.

It is found in the nucleus. Transcriptional activator which binds specifically to the MEF2 element, 5'-YTA[AT](4)TAR-3', found in numerous muscle-specific genes. Also involved in the activation of numerous growth factor- and stress-induced genes. Mediates cellular functions not only in skeletal and cardiac muscle development, but also in neuronal differentiation and survival. Plays diverse roles in the control of cell growth, survival and apoptosis via p38 MAPK signaling in muscle-specific and/or growth factor-related transcription. In cerebellar granule neurons, phosphorylated and sumoylated MEF2A represses transcription of NUR77 promoting synaptic differentiation. Associates with chromatin to the ZNF16 promoter. The polypeptide is Myocyte-specific enhancer factor 2A (Mef2a) (Mus musculus (Mouse)).